The sequence spans 569 residues: Mitogen-activated protein kinase 7 (569 aa).

The Protein kinase domain maps to Tyr13–Phe304. ATP contacts are provided by residues Val19–Val27 and Lys42. Catalysis depends on Asp139, which acts as the Proton acceptor. The residue at position 175 (Thr175) is a Phosphothreonine. A TXY motif is present at residues Thr175–Tyr177. Tyr177 carries the post-translational modification Phosphotyrosine. The segment at Thr401–Val420 is disordered.

It belongs to the protein kinase superfamily. CMGC Ser/Thr protein kinase family. MAP kinase subfamily. Post-translationally, dually phosphorylated on Thr-175 and Tyr-177, which activates the enzyme.

It catalyses the reaction L-seryl-[protein] + ATP = O-phospho-L-seryl-[protein] + ADP + H(+). It carries out the reaction L-threonyl-[protein] + ATP = O-phospho-L-threonyl-[protein] + ADP + H(+). With respect to regulation, activated by threonine and tyrosine phosphorylation. The polypeptide is Mitogen-activated protein kinase 7 (MPK7) (Oryza sativa subsp. japonica (Rice)).